The following is a 270-amino-acid chain: Putative phosphoenolpyruvate synthase regulatory protein (270 aa).

Position 150–157 (150–157 (GVSRCGKT)) interacts with ADP.

It belongs to the pyruvate, phosphate/water dikinase regulatory protein family. PSRP subfamily.

The enzyme catalyses [pyruvate, water dikinase] + ADP = [pyruvate, water dikinase]-phosphate + AMP + H(+). The catalysed reaction is [pyruvate, water dikinase]-phosphate + phosphate + H(+) = [pyruvate, water dikinase] + diphosphate. In terms of biological role, bifunctional serine/threonine kinase and phosphorylase involved in the regulation of the phosphoenolpyruvate synthase (PEPS) by catalyzing its phosphorylation/dephosphorylation. The protein is Putative phosphoenolpyruvate synthase regulatory protein of Shewanella putrefaciens (strain CN-32 / ATCC BAA-453).